A 421-amino-acid polypeptide reads, in one-letter code: Histidine--tRNA ligase (421 aa).

The protein belongs to the class-II aminoacyl-tRNA synthetase family. In terms of assembly, homodimer.

Its subcellular location is the cytoplasm. It carries out the reaction tRNA(His) + L-histidine + ATP = L-histidyl-tRNA(His) + AMP + diphosphate + H(+). In Francisella tularensis subsp. novicida (strain U112), this protein is Histidine--tRNA ligase.